The following is a 222-amino-acid chain: CEACAM1-like protein UL7 (222 aa).

Residues asparagine 50, asparagine 56, asparagine 60, asparagine 71, asparagine 105, asparagine 109, asparagine 125, asparagine 132, asparagine 147, asparagine 164, asparagine 168, and asparagine 189 are each glycosylated (N-linked (GlcNAc...) asparagine; by host). Residues leucine 193 to tryptophan 213 traverse the membrane as a helical segment.

This sequence belongs to the RL11 family. Highly glycosylated.

The protein localises to the secreted. It is found in the host cell membrane. Plays a role in modulating the host immune response and affecting host cytokine production. Structurally and functionally homolog of host CEACAM1, induces endothelial cell angiogenesis. This Homo sapiens (Human) protein is CEACAM1-like protein UL7 (UL7).